The chain runs to 551 residues: Nucleobase-ascorbate transporter 3 (551 aa).

A disordered region spans residues 1 to 30 (MVETGHHHQHPPAPAAAGHPPVPSMAMARN). 12 helical membrane passes run 56 to 76 (ETVVLAFQHYIVMLGTTVLIA), 92 to 111 (RVIQTILFMSGINTLLQTLI), 117 to 136 (TVMGVSFAYVLPVLSIIRDY), 158 to 178 (SLIISSFVNIIIGYGQAWGNL), 179 to 199 (IRIFSPIIVVPVVSVVSLGLF), 202 to 222 (GFPLLANCVEIGLPMLILLII), 242 to 262 (ALLVCLAIIWAFAAILTVSGA), 306 to 326 (VFGMFGAAIVASAESTGVFFA), 390 to 410 (FFMIFFSIFGKFGAFFASIPL), 412 to 432 (IFAGVYCILLGIVVAVGISFI), 442 to 462 (NMYVIGVSLFLSLSIAQYFLA), and 481 to 501 (DILNTIFASAPLVATILATIL).

The protein belongs to the nucleobase:cation symporter-2 (NCS2) (TC 2.A.40) family. As to expression, expressed in the apical meristem 4 days after imbibition (DAI). Expressed in the major veins of rosette leaves and pedicels. Expressed in the root central cylinder, root meristems, root tips and lateral root primordia.

It localises to the membrane. The chain is Nucleobase-ascorbate transporter 3 (NAT3) from Arabidopsis thaliana (Mouse-ear cress).